The chain runs to 251 residues: 2,3-bisphosphoglycerate-dependent phosphoglycerate mutase (251 aa).

Substrate is bound by residues 11-18, 24-25, R63, 90-93, K101, 117-118, and 184-185; these read RHGESDWN, TG, ERHY, RR, and GN. Residue H12 is the Tele-phosphohistidine intermediate of the active site. E90 serves as the catalytic Proton donor/acceptor.

Belongs to the phosphoglycerate mutase family. BPG-dependent PGAM subfamily.

It carries out the reaction (2R)-2-phosphoglycerate = (2R)-3-phosphoglycerate. The protein operates within carbohydrate degradation; glycolysis; pyruvate from D-glyceraldehyde 3-phosphate: step 3/5. In terms of biological role, catalyzes the interconversion of 2-phosphoglycerate and 3-phosphoglycerate. The chain is 2,3-bisphosphoglycerate-dependent phosphoglycerate mutase from Mycobacterium marinum (strain ATCC BAA-535 / M).